Reading from the N-terminus, the 725-residue chain is Ribonuclease R (725 aa).

One can recognise an RNB domain in the interval 264-592 (RQDLTDLAFV…IHRLLWMHLF (329 aa)). One can recognise an S1 motif domain in the interval 644 to 725 (GKTFSGFISA…IQKRAILTLI (82 aa)).

The protein belongs to the RNR ribonuclease family. RNase R subfamily.

It localises to the cytoplasm. The catalysed reaction is Exonucleolytic cleavage in the 3'- to 5'-direction to yield nucleoside 5'-phosphates.. Its function is as follows. 3'-5' exoribonuclease that releases 5'-nucleoside monophosphates and is involved in maturation of structured RNAs. The sequence is that of Ribonuclease R from Mycoplasma genitalium (strain ATCC 33530 / DSM 19775 / NCTC 10195 / G37) (Mycoplasmoides genitalium).